A 380-amino-acid polypeptide reads, in one-letter code: Hydrogenase maturation factor HypD1 (380 aa).

The Fe cation site is built by Cys36, Cys64, and Cys67.

Belongs to the HypD family. [4Fe-4S] cluster serves as cofactor.

It functions in the pathway protein modification; [NiFe] hydrogenase maturation. Functionally, involved in the maturation of [NiFe] hydrogenases. Involved in the biosynthesis of the Fe(CN)(2)CO cofactor. The chain is Hydrogenase maturation factor HypD1 (hypD1) from Bradyrhizobium diazoefficiens (strain JCM 10833 / BCRC 13528 / IAM 13628 / NBRC 14792 / USDA 110).